Reading from the N-terminus, the 443-residue chain is Chromosomal replication initiator protein DnaA (443 aa).

The interval 1–76 (METKALWEKL…KSVLNSYVSV (76 aa)) is domain I, interacts with DnaA modulators. Positions 76–99 (VDFLTKEIFEKNTKKENKKEPINT) are domain II. Positions 100–320 (VLSENALTFE…GLVNRLLFFG (221 aa)) are domain III, AAA+ region. Glycine 145, glycine 147, lysine 148, and threonine 149 together coordinate ATP. Residues 321-443 (IQNDLGHIID…ESLKNEIIGK (123 aa)) are domain IV, binds dsDNA.

Belongs to the DnaA family. Oligomerizes as a right-handed, spiral filament on DNA at oriC.

It localises to the cytoplasm. Functionally, plays an essential role in the initiation and regulation of chromosomal replication. ATP-DnaA binds to the origin of replication (oriC) to initiate formation of the DNA replication initiation complex once per cell cycle. Binds the DnaA box (a 9 base pair repeat at the origin) and separates the double-stranded (ds)DNA. Forms a right-handed helical filament on oriC DNA; dsDNA binds to the exterior of the filament while single-stranded (ss)DNA is stabiized in the filament's interior. The ATP-DnaA-oriC complex binds and stabilizes one strand of the AT-rich DNA unwinding element (DUE), permitting loading of DNA polymerase. After initiation quickly degrades to an ADP-DnaA complex that is not apt for DNA replication. Binds acidic phospholipids. The sequence is that of Chromosomal replication initiator protein DnaA from Mesoplasma florum (strain ATCC 33453 / NBRC 100688 / NCTC 11704 / L1) (Acholeplasma florum).